The primary structure comprises 322 residues: Succinate/fumarate mitochondrial transporter (322 aa).

Solcar repeat units follow at residues 8-99 (SHPA…YRTL), 111-202 (GNTF…LKEF), and 212-303 (LPSW…VREH). 6 consecutive transmembrane segments (helical) span residues 11–31 (AINLMAGGTAGLFEALCCHPL), 68–88 (FLALYKGLGAVVIGIIPKMAI), 114–134 (FVAGVGAGITEAVLVVNPMEV), 177–193 (GVSLTAARQATNQGANF), 219–235 (CIGLISGAIGPFSNAPL), and 278–295 (GITPRVMRVAPGQAVTFT).

Belongs to the mitochondrial carrier (TC 2.A.29) family.

The protein resides in the mitochondrion inner membrane. In terms of biological role, transports cytoplasmic succinate, derived from isocitrate by the action of isocitrate lyase in the cytosol, into the mitochondrial matrix in exchange for fumarate. This chain is Succinate/fumarate mitochondrial transporter (SFC1), found in Saccharomyces cerevisiae (strain ATCC 204508 / S288c) (Baker's yeast).